Reading from the N-terminus, the 415-residue chain is Heterogeneous nuclear ribonucleoprotein F (415 aa).

N-acetylmethionine is present on M1. Residue M2 is modified to N-acetylmethionine; in Heterogeneous nuclear ribonucleoprotein F, N-terminally processed. The RRM 1 domain occupies 11–90 (YVVKLRGLPW…RYIEVFKSHR (80 aa)). Residue K72 forms a Glycyl lysine isopeptide (Lys-Gly) (interchain with G-Cter in SUMO) linkage. Positions 81–86 (RYIEVF) are interaction with RNA. K87 participates in a covalent cross-link: Glycyl lysine isopeptide (Lys-Gly) (interchain with G-Cter in SUMO2). S104, S107, and S161 each carry phosphoserine. One can recognise an RRM 2 domain in the interval 111–188 (GFVRLRGLPF…RYIEVFKSSQ (78 aa)). K167 participates in a covalent cross-link: Glycyl lysine isopeptide (Lys-Gly) (interchain with G-Cter in SUMO2). The interval 179 to 184 (RYIEVF) is interaction with RNA. K185 participates in a covalent cross-link: Glycyl lysine isopeptide (Lys-Gly) (interchain with G-Cter in SUMO2). Residues S187, S193, and S195 each carry the phosphoserine modification. K200 bears the N6-acetyllysine; alternate mark. A Glycyl lysine isopeptide (Lys-Gly) (interchain with G-Cter in SUMO2); alternate cross-link involves residue K200. T215 bears the Phosphothreonine mark. Residue K224 is modified to N6-acetyllysine; alternate. K224 is covalently cross-linked (Glycyl lysine isopeptide (Lys-Gly) (interchain with G-Cter in SUMO2); alternate). S265 bears the Phosphoserine mark. In terms of domain architecture, RRM 3 spans 289–366 (HCVHMRGLPY…IELFLNSTTG (78 aa)). Positions 355-360 (RYIELF) are interaction with RNA.

Identified in the spliceosome C complex. Interacts with AGO1, AGO2, TBP and TXNL4/DIM1. In terms of processing, sumoylated.

The protein resides in the nucleus. It is found in the nucleoplasm. Component of the heterogeneous nuclear ribonucleoprotein (hnRNP) complexes which provide the substrate for the processing events that pre-mRNAs undergo before becoming functional, translatable mRNAs in the cytoplasm. Plays a role in the regulation of alternative splicing events. Binds G-rich sequences in pre-mRNAs and keeps target RNA in an unfolded state. In Mus musculus (Mouse), this protein is Heterogeneous nuclear ribonucleoprotein F (Hnrnpf).